The primary structure comprises 560 residues: Dihydroxy-acid dehydratase (560 aa).

D80 serves as a coordination point for Mg(2+). C121 serves as a coordination point for [2Fe-2S] cluster. Positions 122 and 123 each coordinate Mg(2+). At K123 the chain carries N6-carboxylysine. C194 contacts [2Fe-2S] cluster. E447 serves as a coordination point for Mg(2+). S473 serves as the catalytic Proton acceptor.

Belongs to the IlvD/Edd family. In terms of assembly, homodimer. Requires [2Fe-2S] cluster as cofactor. Mg(2+) is required as a cofactor.

It carries out the reaction (2R)-2,3-dihydroxy-3-methylbutanoate = 3-methyl-2-oxobutanoate + H2O. It catalyses the reaction (2R,3R)-2,3-dihydroxy-3-methylpentanoate = (S)-3-methyl-2-oxopentanoate + H2O. Its pathway is amino-acid biosynthesis; L-isoleucine biosynthesis; L-isoleucine from 2-oxobutanoate: step 3/4. It participates in amino-acid biosynthesis; L-valine biosynthesis; L-valine from pyruvate: step 3/4. Its function is as follows. Functions in the biosynthesis of branched-chain amino acids. Catalyzes the dehydration of (2R,3R)-2,3-dihydroxy-3-methylpentanoate (2,3-dihydroxy-3-methylvalerate) into 2-oxo-3-methylpentanoate (2-oxo-3-methylvalerate) and of (2R)-2,3-dihydroxy-3-methylbutanoate (2,3-dihydroxyisovalerate) into 2-oxo-3-methylbutanoate (2-oxoisovalerate), the penultimate precursor to L-isoleucine and L-valine, respectively. The sequence is that of Dihydroxy-acid dehydratase from Chloroherpeton thalassium (strain ATCC 35110 / GB-78).